A 739-amino-acid chain; its full sequence is Poly(A) polymerase alpha (739 aa).

A compositionally biased stretch (low complexity) spans 1-17; it reads MPFPVTTQGSQQTQPPQ. Positions 1-23 are disordered; that stretch reads MPFPVTTQGSQQTQPPQKHYGIT. Phosphoserine occurs at positions 10 and 24. Residues 100–102, Thr-109, 113–115, Asp-167, Lys-228, Tyr-237, and 246–247 each bind ATP; these read FGS, DID, and GV. Mg(2+)-binding residues include Asp-113, Asp-115, and Asp-167. Residues Lys-444, Lys-445, Lys-506, and Lys-507 each participate in a glycyl lysine isopeptide (Lys-Gly) (interchain with G-Cter in SUMO) cross-link. The Nuclear localization signal 1 motif lies at 490–507; it reads RKQLHQLLPSHVLQKKKK. Disordered stretches follow at residues 501 to 565 and 580 to 700; these read VLQK…AVTA and QINS…TIQT. The segment at 508–643 is ser/Thr-rich; the sequence is HSTEGVKLTP…AKIPNPIVGV (136 aa). Low complexity predominate over residues 518-534; that stretch reads LNDSSLDLSMDSDNSMS. Residues 535–557 show a composition bias toward polar residues; it reads VPSPTSAMKTSPLNSSGSSQGRN. Residue Ser-537 is modified to Phosphoserine; by MAPK. Position 558 is a phosphoserine (Ser-558). A compositionally biased stretch (low complexity) spans 583–594; it reads SSESSGGTSSES. Residues 595 to 604 show a composition bias toward polar residues; the sequence is IPQTATQPAI. Positions 611–620 are enriched in low complexity; the sequence is TVSRVVSSTR. Residues Lys-635 and Lys-644 each carry the N6-acetyllysine modification. The short motif at 644-659 is the Nuclear localization signal 2 element; it reads KRTSSPHKEESPKKTK. 2 stretches are compositionally biased toward basic and acidic residues: residues 649–660 and 676–686; these read PHKEESPKKTKT and GHDKTETKEQL. The segment at 671–739 is required for interaction with NUDT21; it reads CLALSGHDKT…KNSIKLRLNR (69 aa). The span at 688–700 shows a compositional bias: low complexity; it reads TETSTTQSETIQT. Residue Lys-730 is modified to N6-acetyllysine; alternate. Lys-730 is covalently cross-linked (Glycyl lysine isopeptide (Lys-Gly) (interchain with G-Cter in SUMO); alternate). At Ser-732 the chain carries Phosphoserine. Lys-734 carries the N6-acetyllysine; alternate modification. Lys-734 participates in a covalent cross-link: Glycyl lysine isopeptide (Lys-Gly) (interchain with G-Cter in SUMO); alternate.

The protein belongs to the poly(A) polymerase family. In terms of assembly, monomer. Found in a complex with CPSF1, FIP1L1 and PAPOLA. Interacts with AHCYL1 and FIP1L1; the interaction with AHCYL1 seems to increase interaction with FIP1L1. Interacts with NUDT21; the interaction is diminished by acetylation. Interacts with KPNB1; the interaction promotes PAP nuclear import and is inhibited by acetylation of PAP. Mg(2+) serves as cofactor. Mn(2+) is required as a cofactor. Post-translationally, polysumoylated. Varying sumoylation depending on tissue- and cell-type. Highly sumoylated in bladder and NIH 3T3 cells. Sumoylation is required for nuclear localization and enhances PAP stability. Desumoylated by SENP1. Inhibits polymerase activity. In terms of processing, hyperphosphorylation on multiple CDK2 consensus and non-consensus sites in the C-terminal Ser/Thr-rich region represses PAP activity in late M-phase. Phosphorylation/dephosphorylation may regulate the interaction between PAP and CPSF. Acetylated in the C-terminus. Acetylation decreases interaction with NUDT21 and KPNB1, and inhibits nuclear localization through inhibiting binding to the importin alpha/beta complex.

The protein resides in the nucleus. The enzyme catalyses RNA(n) + ATP = RNA(n)-3'-adenine ribonucleotide + diphosphate. Functionally, polymerase that creates the 3'-poly(A) tail of mRNA's. Also required for the endoribonucleolytic cleavage reaction at some polyadenylation sites. May acquire specificity through interaction with a cleavage and polyadenylation specificity factor (CPSF) at its C-terminus. The sequence is that of Poly(A) polymerase alpha (PAPOLA) from Bos taurus (Bovine).